Here is a 275-residue protein sequence, read N- to C-terminus: Large ribosomal subunit protein uL2 (275 aa).

Residues 221–275 (RGMTMNPVDHPMGGGEGRSKGHIPQSPWGIPAKGYKTRKSKKPSDKLIVKRRKQK) are disordered.

This sequence belongs to the universal ribosomal protein uL2 family. As to quaternary structure, part of the 50S ribosomal subunit. Forms a bridge to the 30S subunit in the 70S ribosome.

One of the primary rRNA binding proteins. Required for association of the 30S and 50S subunits to form the 70S ribosome, for tRNA binding and peptide bond formation. It has been suggested to have peptidyltransferase activity; this is somewhat controversial. Makes several contacts with the 16S rRNA in the 70S ribosome. This Kosmotoga olearia (strain ATCC BAA-1733 / DSM 21960 / TBF 19.5.1) protein is Large ribosomal subunit protein uL2.